A 284-amino-acid polypeptide reads, in one-letter code: L-ribulose-5-phosphate 3-epimerase UlaE (284 aa).

The protein belongs to the L-ribulose-5-phosphate 3-epimerase family.

It catalyses the reaction L-ribulose 5-phosphate = L-xylulose 5-phosphate. It participates in cofactor degradation; L-ascorbate degradation; D-xylulose 5-phosphate from L-ascorbate: step 3/4. Catalyzes the isomerization of L-xylulose-5-phosphate to L-ribulose-5-phosphate. Is involved in the anaerobic L-ascorbate utilization. The protein is L-ribulose-5-phosphate 3-epimerase UlaE of Shigella flexneri serotype 5b (strain 8401).